We begin with the raw amino-acid sequence, 354 residues long: Uroporphyrinogen decarboxylase (354 aa).

Residues 27–31, F46, D77, Y154, T209, and H327 each bind substrate; that span reads RQAGR.

It belongs to the uroporphyrinogen decarboxylase family. Homodimer.

Its subcellular location is the cytoplasm. It carries out the reaction uroporphyrinogen III + 4 H(+) = coproporphyrinogen III + 4 CO2. Its pathway is porphyrin-containing compound metabolism; protoporphyrin-IX biosynthesis; coproporphyrinogen-III from 5-aminolevulinate: step 4/4. In terms of biological role, catalyzes the decarboxylation of four acetate groups of uroporphyrinogen-III to yield coproporphyrinogen-III. The sequence is that of Uroporphyrinogen decarboxylase from Salmonella typhi.